The primary structure comprises 308 residues: MASSNTVLMRLVASAYSIAQKAGMIVRRVIAEGDLGIVEKTCATDLQTKADRLAQMSICSSLARKFPKLTIIGEEDLPSEEVDQELIEDSQWEEILKQPCPSQYSAIKEEDLVVWVDPLDGTKEYTEGLLDNVTVLIGIAYEGKAIAGVINQPYYNYEAGPDAVLGRTIWGVLGLGAFGFQLKEVPAGKHIITTTRSHSNKLVTDCVAAMNPDAVLRVGGAGNKIIQLIEGKASAYVFASPGCKKWDTCAPEVILHAVGGKLTDIHGNVLQYHKDVKHMNSAGVLATLRNYDYYASRVPESIKNALVP.

Position 2 is an N-acetylalanine (alanine 2). Aspartate 51 serves as the catalytic Proton acceptor. Glutamate 74, aspartate 117, leucine 119, and aspartate 120 together coordinate Mg(2+). Threonine 122 (proton acceptor) is an active-site residue. The residue at position 122 (threonine 122) is a Phosphothreonine. The AMP site is built by threonine 195, histidine 198, glycine 220, and lysine 224. The residue at position 240 (serine 240) is a Phosphoserine. At lysine 244 the chain carries N6-succinyllysine. Aspartate 247 serves as a coordination point for Mg(2+).

It belongs to the inositol monophosphatase superfamily. Mg(2+) is required as a cofactor. As to expression, highly expressed in kidney, liver, pancreas and heart. Detected at lower levels in brain, placenta, lung and skeletal muscle.

The enzyme catalyses adenosine 3',5'-bisphosphate + H2O = AMP + phosphate. The catalysed reaction is adenosine 2',5'-bisphosphate + H2O = AMP + phosphate. It carries out the reaction 3'-phosphoadenylyl sulfate + H2O = adenosine 5'-phosphosulfate + phosphate. It catalyses the reaction 1D-myo-inositol 1,4-bisphosphate + H2O = 1D-myo-inositol 4-phosphate + phosphate. The enzyme catalyses 1D-myo-inositol 1,3,4-trisphosphate + H2O = 1D-myo-inositol 3,4-bisphosphate + phosphate. With respect to regulation, is very sensitive to inhibition by Li(+) (IC(50)=0.3 mM for hydrolysis of PAP; IC(50)=0.6 mM for hydrolysis of inositol-1,4-bis-phosphate). Is not affected by high Na(+) concentrations. Its function is as follows. Phosphatase that converts 3'(2')-phosphoadenosine 5'-phosphate (PAP) to AMP and inositol 1,4-bisphosphate (Ins(1,4)P2) to inositol 4-phosphate. Is also able to hydrolyze adenosine 3'-phosphate 5'-phosphosulfate (PAPS) to adenosine 5'-phosphosulfate (APS). Probably prevents the toxic accumulation of PAP, a compound which inhibits a variety of proteins, including PAPS-utilizing enzymes such as sulfotransferases, and RNA processing enzymes. Could also play a role in inositol recycling and phosphoinositide metabolism. Is not active on 3'-AMP, inositol-1-phosphate and inositol-1,4,5-triphosphate. This chain is 3'(2'),5'-bisphosphate nucleotidase 1 (BPNT1), found in Homo sapiens (Human).